The following is a 275-amino-acid chain: Probable endonuclease lcl3 (275 aa).

The segment at 1 to 25 is disordered; the sequence is MRWPPWASNTQASNNDHPTTTNNND. The span at 14 to 25 shows a compositional bias: low complexity; sequence NNDHPTTTNNND. The helical transmembrane segment at 41 to 57 threads the bilayer; that stretch reads LIPTLVLTTGILSAFTL. Positions 79-247 constitute a TNase-like domain; that stretch reads RSILGKVTSV…KARGLGLWKG (169 aa). Arginine 130 is a catalytic residue. Ca(2+) is bound at residue aspartate 135. Active-site residues include glutamate 138 and arginine 178.

This sequence belongs to the LCL3 family.

The protein localises to the mitochondrion. The protein resides in the membrane. The sequence is that of Probable endonuclease lcl3 (lcl3) from Aspergillus niger (strain ATCC MYA-4892 / CBS 513.88 / FGSC A1513).